The sequence spans 294 residues: Deubiquitinase OTUD6B (294 aa).

The disordered stretch occupies residues 85-120 (VTSLDLGSEEPVQQPRVSKAQKRREKKAAQEKERDD). Basic and acidic residues predominate over residues 111 to 120 (KAAQEKERDD). Residues 150–287 (LQIRQIPSDG…GEHYNSVEQL (138 aa)) enclose the OTU domain. The segment at 155-161 (IPSDGHC) is cys-loop. Residue aspartate 158 is part of the active site. The Nucleophile role is filled by cysteine 161. The segment at 222-232 (IVNTPAWGGQL) is variable-loop. A his-loop region spans residues 270–280 (YMRHAYGLGEH). Histidine 280 is an active-site residue.

It carries out the reaction Thiol-dependent hydrolysis of ester, thioester, amide, peptide and isopeptide bonds formed by the C-terminal Gly of ubiquitin (a 76-residue protein attached to proteins as an intracellular targeting signal).. Deubiquitinating enzyme that may play a role in the ubiquitin-dependent regulation of different cellular processes. This is Deubiquitinase OTUD6B (otud6b) from Xenopus laevis (African clawed frog).